Here is a 475-residue protein sequence, read N- to C-terminus: Ataxin-10 (475 aa).

Residue Arg-10 is modified to Omega-N-methylarginine. 2 positions are modified to phosphoserine: Ser-12 and Ser-77. Thr-82 carries the post-translational modification Phosphothreonine. Phosphoserine is present on Ser-430.

The protein belongs to the ataxin-10 family. As to quaternary structure, homooligomer. Interacts with GNB2. Interacts with IQCB1. Interacts with OGT. Post-translationally, polyubiquitinated. Phosphorylation at Ser-12 by AURKB promotes the association of ATXN10 with PLK1. Phosphorylation at Ser-77 and Thr-82 by PLK1 may play a role in the regulation of cytokinesis and may stimulate the proteasome-mediated degradation of ATXN10. As to expression, ubiquitous distribution. Markedly increased expression in testis, adrenals, and brain.

Its subcellular location is the cytoplasm. It is found in the perinuclear region. The protein localises to the midbody. The protein resides in the cytoskeleton. It localises to the cilium basal body. Its subcellular location is the microtubule organizing center. It is found in the centrosome. The protein localises to the centriole. Functionally, may play a role in the regulation of cytokinesis. May play a role in signaling by stimulating protein glycosylation. Induces neuritogenesis by activating the Ras-MAP kinase pathway and is necessary for the survival of cerebellar neurons. Does not appear to play a major role in ciliogenesis. This is Ataxin-10 (Atxn10) from Rattus norvegicus (Rat).